A 418-amino-acid chain; its full sequence is Histidine--tRNA ligase (418 aa).

Belongs to the class-II aminoacyl-tRNA synthetase family. Homodimer.

It is found in the cytoplasm. It catalyses the reaction tRNA(His) + L-histidine + ATP = L-histidyl-tRNA(His) + AMP + diphosphate + H(+). This Dehalococcoides mccartyi (strain ATCC BAA-2100 / JCM 16839 / KCTC 5957 / BAV1) protein is Histidine--tRNA ligase.